We begin with the raw amino-acid sequence, 32 residues long: Hemocyanin C chain (32 aa).

Belongs to the tyrosinase family. Hemocyanin subfamily. In terms of tissue distribution, hemolymph.

The protein resides in the secreted. The protein localises to the extracellular space. Hemocyanins are copper-containing oxygen carriers occurring freely dissolved in the hemolymph of many mollusks and arthropods. This chain is Hemocyanin C chain, found in Cherax destructor (Common yabby crayfish).